The following is a 354-amino-acid chain: Probable L-ascorbate-6-phosphate lactonase UlaG (354 aa).

This sequence belongs to the UlaG family. A divalent metal cation serves as cofactor.

The protein resides in the cytoplasm. It catalyses the reaction L-ascorbate 6-phosphate + H2O = 3-dehydro-L-gulonate 6-phosphate. It participates in cofactor degradation; L-ascorbate degradation; D-xylulose 5-phosphate from L-ascorbate: step 1/4. In terms of biological role, probably catalyzes the hydrolysis of L-ascorbate-6-P into 3-keto-L-gulonate-6-P. Is essential for L-ascorbate utilization under anaerobic conditions. This Salmonella heidelberg (strain SL476) protein is Probable L-ascorbate-6-phosphate lactonase UlaG.